The following is a 430-amino-acid chain: Enolase (430 aa).

Position 163 (Q163) interacts with (2R)-2-phosphoglycerate. E205 (proton donor) is an active-site residue. Positions 242, 286, and 313 each coordinate Mg(2+). K338, R367, S368, and K389 together coordinate (2R)-2-phosphoglycerate. K338 serves as the catalytic Proton acceptor.

It belongs to the enolase family. Requires Mg(2+) as cofactor.

It is found in the cytoplasm. It localises to the secreted. The protein resides in the cell surface. The enzyme catalyses (2R)-2-phosphoglycerate = phosphoenolpyruvate + H2O. Its pathway is carbohydrate degradation; glycolysis; pyruvate from D-glyceraldehyde 3-phosphate: step 4/5. In terms of biological role, catalyzes the reversible conversion of 2-phosphoglycerate (2-PG) into phosphoenolpyruvate (PEP). It is essential for the degradation of carbohydrates via glycolysis. In Geotalea daltonii (strain DSM 22248 / JCM 15807 / FRC-32) (Geobacter daltonii), this protein is Enolase.